Consider the following 688-residue polypeptide: DNA ligase (688 aa).

NAD(+)-binding positions include aspartate 38 to aspartate 42, serine 87 to leucine 88, and glutamate 118. The active-site N6-AMP-lysine intermediate is the lysine 120. NAD(+) contacts are provided by arginine 141, glutamate 175, lysine 291, and lysine 315. Residues cysteine 409, cysteine 412, cysteine 428, and cysteine 433 each contribute to the Zn(2+) site. The BRCT domain occupies valine 590–glutamate 679.

This sequence belongs to the NAD-dependent DNA ligase family. LigA subfamily. The cofactor is Mg(2+). Mn(2+) is required as a cofactor.

The enzyme catalyses NAD(+) + (deoxyribonucleotide)n-3'-hydroxyl + 5'-phospho-(deoxyribonucleotide)m = (deoxyribonucleotide)n+m + AMP + beta-nicotinamide D-nucleotide.. Its function is as follows. DNA ligase that catalyzes the formation of phosphodiester linkages between 5'-phosphoryl and 3'-hydroxyl groups in double-stranded DNA using NAD as a coenzyme and as the energy source for the reaction. It is essential for DNA replication and repair of damaged DNA. The polypeptide is DNA ligase (Thermotoga maritima (strain ATCC 43589 / DSM 3109 / JCM 10099 / NBRC 100826 / MSB8)).